The primary structure comprises 460 residues: Probable carboxypeptidase TRV_02791 (460 aa).

The N-terminal stretch at 1-22 (MQKTYLWALVSLLASSLVDARS) is a signal peptide. N98 is a glycosylation site (N-linked (GlcNAc...) asparagine). D175 is a binding site for Zn(2+). E207 serves as the catalytic Proton acceptor. E208 is a Zn(2+) binding site. N395 is a glycosylation site (N-linked (GlcNAc...) asparagine).

Belongs to the peptidase M20A family. Zn(2+) serves as cofactor.

It localises to the secreted. The chain is Probable carboxypeptidase TRV_02791 from Trichophyton verrucosum (strain HKI 0517).